The chain runs to 361 residues: Phospho-N-acetylmuramoyl-pentapeptide-transferase (361 aa).

Helical transmembrane passes span 27–47 (GAIV…ISTL), 72–92 (TPTM…LLWA), 94–114 (LSNL…LIGF), 133–153 (ARLA…INAG), 169–189 (LLLD…VAAG), 200–220 (GLAI…SYLS), 237–257 (VGEL…FLWF), 264–284 (IFMG…IAVA), 289–309 (IVLA…IVQV), and 338–358 (QVVI…LATL).

The protein belongs to the glycosyltransferase 4 family. MraY subfamily. It depends on Mg(2+) as a cofactor.

It localises to the cell inner membrane. The catalysed reaction is UDP-N-acetyl-alpha-D-muramoyl-L-alanyl-gamma-D-glutamyl-meso-2,6-diaminopimeloyl-D-alanyl-D-alanine + di-trans,octa-cis-undecaprenyl phosphate = di-trans,octa-cis-undecaprenyl diphospho-N-acetyl-alpha-D-muramoyl-L-alanyl-D-glutamyl-meso-2,6-diaminopimeloyl-D-alanyl-D-alanine + UMP. It participates in cell wall biogenesis; peptidoglycan biosynthesis. In terms of biological role, catalyzes the initial step of the lipid cycle reactions in the biosynthesis of the cell wall peptidoglycan: transfers peptidoglycan precursor phospho-MurNAc-pentapeptide from UDP-MurNAc-pentapeptide onto the lipid carrier undecaprenyl phosphate, yielding undecaprenyl-pyrophosphoryl-MurNAc-pentapeptide, known as lipid I. In Azorhizobium caulinodans (strain ATCC 43989 / DSM 5975 / JCM 20966 / LMG 6465 / NBRC 14845 / NCIMB 13405 / ORS 571), this protein is Phospho-N-acetylmuramoyl-pentapeptide-transferase.